Reading from the N-terminus, the 256-residue chain is DNA repair protein RecO (256 aa).

The protein belongs to the RecO family.

Its function is as follows. Involved in DNA repair and RecF pathway recombination. This chain is DNA repair protein RecO, found in Bartonella henselae (strain ATCC 49882 / DSM 28221 / CCUG 30454 / Houston 1) (Rochalimaea henselae).